Reading from the N-terminus, the 415-residue chain is Gamma-glutamyl phosphate reductase (415 aa).

This sequence belongs to the gamma-glutamyl phosphate reductase family.

It localises to the cytoplasm. The catalysed reaction is L-glutamate 5-semialdehyde + phosphate + NADP(+) = L-glutamyl 5-phosphate + NADPH + H(+). It participates in amino-acid biosynthesis; L-proline biosynthesis; L-glutamate 5-semialdehyde from L-glutamate: step 2/2. In terms of biological role, catalyzes the NADPH-dependent reduction of L-glutamate 5-phosphate into L-glutamate 5-semialdehyde and phosphate. The product spontaneously undergoes cyclization to form 1-pyrroline-5-carboxylate. The chain is Gamma-glutamyl phosphate reductase from Thermotoga maritima (strain ATCC 43589 / DSM 3109 / JCM 10099 / NBRC 100826 / MSB8).